Consider the following 175-residue polypeptide: 2-oxo-4-hydroxy-4-carboxy-5-ureidoimidazoline decarboxylase (175 aa).

The active-site Proton donor is the His67. Substrate contacts are provided by residues Pro68, 84–88, and 119–123; these read SQNEQ and FVICA. Residues 173-175 carry the Microbody targeting signal motif; the sequence is TKL.

Belongs to the OHCU decarboxylase family.

The protein localises to the peroxisome. The enzyme catalyses 5-hydroxy-2-oxo-4-ureido-2,5-dihydro-1H-imidazole-5-carboxylate + H(+) = (S)-allantoin + CO2. It participates in purine metabolism; urate degradation; (S)-allantoin from urate: step 3/3. Functionally, catalyzes the stereoselective decarboxylation of 2-oxo-4-hydroxy-4-carboxy-5-ureidoimidazoline (OHCU) to (S)-allantoin. This is 2-oxo-4-hydroxy-4-carboxy-5-ureidoimidazoline decarboxylase (urad) from Xenopus laevis (African clawed frog).